Here is a 303-residue protein sequence, read N- to C-terminus: Serine/threonine-protein phosphatase 6 catalytic subunit (303 aa).

Mn(2+)-binding residues include Asp51, His53, Asp79, and Asn111. His112 functions as the Proton donor in the catalytic mechanism. Mn(2+) contacts are provided by His161 and His235.

The protein belongs to the PPP phosphatase family. PP-6 (PP-V) subfamily. Mn(2+) is required as a cofactor.

It localises to the cytoplasm. The enzyme catalyses O-phospho-L-seryl-[protein] + H2O = L-seryl-[protein] + phosphate. The catalysed reaction is O-phospho-L-threonyl-[protein] + H2O = L-threonyl-[protein] + phosphate. Functionally, may be involved in controlling cellularization or in regulating transcription of the genes involved in this process. In Drosophila melanogaster (Fruit fly), this protein is Serine/threonine-protein phosphatase 6 catalytic subunit (PpV).